Reading from the N-terminus, the 376-residue chain is Histidinol-phosphate aminotransferase (376 aa).

N6-(pyridoxal phosphate)lysine is present on lysine 230.

It belongs to the class-II pyridoxal-phosphate-dependent aminotransferase family. Histidinol-phosphate aminotransferase subfamily. In terms of assembly, homodimer. Pyridoxal 5'-phosphate is required as a cofactor.

It catalyses the reaction L-histidinol phosphate + 2-oxoglutarate = 3-(imidazol-4-yl)-2-oxopropyl phosphate + L-glutamate. Its pathway is amino-acid biosynthesis; L-histidine biosynthesis; L-histidine from 5-phospho-alpha-D-ribose 1-diphosphate: step 7/9. The polypeptide is Histidinol-phosphate aminotransferase (Trichodesmium erythraeum (strain IMS101)).